A 66-amino-acid polypeptide reads, in one-letter code: uncharacterized protein (66 aa).

Residues 5 to 59 (VKELRARFGYSQEKLGETVGVTRQTVAAIEKGDYVPSLLLALKICKAFSMKMEDV) form the HTH cro/C1-type domain. Positions 16 to 35 (QEKLGETVGVTRQTVAAIEK) form a DNA-binding region, H-T-H motif.

This is an uncharacterized protein from Bacillus subtilis (strain 168).